The following is a 288-amino-acid chain: Large ribosomal subunit protein uL2 (288 aa).

Positions 29 to 43 (PEKSLTRGFKRDKGR) are enriched in basic and acidic residues. Disordered stretches follow at residues 29 to 59 (PEKSLTRGFKRDKGRNNRGVITSRRRGGGHK) and 210 to 288 (GRNR…GRQS). 2 stretches are compositionally biased toward basic residues: residues 210 to 221 (GRNRWKGRRPKV) and 272 to 288 (VRRRKKSSKRGRGGRQS).

It belongs to the universal ribosomal protein uL2 family. In terms of assembly, part of the 50S ribosomal subunit. Forms a bridge to the 30S subunit in the 70S ribosome.

In terms of biological role, one of the primary rRNA binding proteins. Required for association of the 30S and 50S subunits to form the 70S ribosome, for tRNA binding and peptide bond formation. It has been suggested to have peptidyltransferase activity; this is somewhat controversial. Makes several contacts with the 16S rRNA in the 70S ribosome. In Thermosynechococcus vestitus (strain NIES-2133 / IAM M-273 / BP-1), this protein is Large ribosomal subunit protein uL2.